Consider the following 728-residue polypeptide: FAD-dependent monooxygenase avaB (728 aa).

The chain crosses the membrane as a helical span at residues 17 to 37 (VIDLLLTFFFYSGLYGLIAAK). Over residues 50–64 (NQQCENTDDVPQSFQ) the composition is skewed to polar residues. Residues 50 to 72 (NQQCENTDDVPQSFQRPRDTRST) form a disordered region. An FAD-binding site is contributed by valine 168. Position 490-491 (490-491 (DL)) interacts with NADP(+).

This sequence belongs to the FAD-binding monooxygenase family. It depends on FAD as a cofactor.

The protein resides in the membrane. The protein operates within secondary metabolite metabolism. Its function is as follows. Multifunctional FAD-dependent monooxygenase; part of the cluster that mediates the biosynthesis of a highly modified cyclo-arginine-tryptophan dipeptide (cRW). Within the pathway, avaB uses the avaA cyclo-arginine-tryptophan dipeptide (cRW) as substrate to generate the cyclo-Arg-formylkynurenine diketopiperazine (DKP). AvaB also catalyzes an additional N-oxidation of the avaC product which is followed by cyclization and dehydration. The first step of the pathway is perfornmed by the arginine-containing cyclodipeptide synthase (RCPDS) avaA that acts as the scaffold-generating enzyme and is responsible for formation of the cyclo-Arg-Trp (cRW) diketopiperazine. AvaB then acts as a multifunctional flavoenzyme that is responsible for generating the cyclo-Arg-formylkynurenine DKP, which can be deformylated by avaC. AvaB then further catalyzes an additional N-oxidation followed by cyclization and dehydration. The next step is an N-acetylation of the guanidine group catalyzed by the arginine N-acetyltransferase avaD. The roles of the additional enzymes identified within the ava cluster still have to be determined. The sequence is that of FAD-dependent monooxygenase avaB from Aspergillus versicolor.